A 132-amino-acid chain; its full sequence is Small ribosomal subunit protein uS8 (132 aa).

This sequence belongs to the universal ribosomal protein uS8 family. In terms of assembly, part of the 30S ribosomal subunit. Contacts proteins S5 and S12.

In terms of biological role, one of the primary rRNA binding proteins, it binds directly to 16S rRNA central domain where it helps coordinate assembly of the platform of the 30S subunit. In Rhodospirillum centenum (strain ATCC 51521 / SW), this protein is Small ribosomal subunit protein uS8.